The chain runs to 177 residues: RNA pyrophosphohydrolase (177 aa).

The Nudix hydrolase domain maps to 6–149 (GYRPNVGIVI…KRDVYRRVMK (144 aa)). Residues 38–59 (GGINPGESAEQAMYRELFEEVG) carry the Nudix box motif.

Belongs to the Nudix hydrolase family. RppH subfamily. Requires a divalent metal cation as cofactor.

Functionally, accelerates the degradation of transcripts by removing pyrophosphate from the 5'-end of triphosphorylated RNA, leading to a more labile monophosphorylated state that can stimulate subsequent ribonuclease cleavage. This chain is RNA pyrophosphohydrolase, found in Pectobacterium carotovorum subsp. carotovorum (strain PC1).